A 271-amino-acid chain; its full sequence is Mannosyl-3-phosphoglycerate phosphatase (271 aa).

Asp-13 acts as the Nucleophile in catalysis. Asp-13, Asp-15, and Asp-214 together coordinate Mg(2+).

It belongs to the HAD-like hydrolase superfamily. MPGP family. The cofactor is Mg(2+).

It localises to the cytoplasm. The enzyme catalyses 2-O-(alpha-D-mannosyl)-3-phosphoglycerate + H2O = (2R)-2-O-(alpha-D-mannosyl)-glycerate + phosphate. The chain is Mannosyl-3-phosphoglycerate phosphatase from Escherichia coli O45:K1 (strain S88 / ExPEC).